The primary structure comprises 1038 residues: Protein argonaute 1D (1038 aa).

2 disordered regions span residues 1 to 58 (MGSR…GAAP) and 110 to 134 (APHEPPANVSSPEAASPEASSPRSL). Composition is skewed to gly residues over residues 18–29 (RGGGRGGGGRGR) and 43–52 (GHGGRGGAGY). A compositionally biased stretch (low complexity) spans 115–134 (PANVSSPEAASPEASSPRSL). Residues 380–493 (PVIDFVIQLL…LPMEVCKIVE (114 aa)) enclose the PAZ domain. The 322-residue stretch at 669 to 990 (LLIGLLPDNN…AAFRARFYME (322 aa)) folds into the Piwi domain. Residues 992-1021 (DSSDSGSMASGRGGGSSTSRSTRAAGGGAV) form a disordered region.

Belongs to the argonaute family. Ago subfamily.

Its function is as follows. Probably involved in the RNA silencing pathway. May bind to short RNAs such as microRNAs (miRNAs) or short interfering RNAs (siRNAs), and represses the translation of mRNAs which are complementary to them. The chain is Protein argonaute 1D (AGO1D) from Oryza sativa subsp. japonica (Rice).